Here is a 418-residue protein sequence, read N- to C-terminus: Ankyrin repeat and SOCS box protein 6 (418 aa).

ANK repeat units lie at residues 65 to 95 (EGVSNALLKMAELGLTRAAAVLLQSGANLNF), 100 to 129 (TYYTALHIAVLRNQPDMVELLVRHGADINR), 134 to 164 (HESSPLDLASEEPERLPCLQRLLDLGADVNA), 168 to 203 (NGKTALLHALASSDGVQIHNTENIRLLLEGGADVKA), 224 to 253 (CGDKEEAPMINRFCFQVTQLLLAHGADPSE), and 258 to 287 (ESLTHICLKSFKLHFPLLCFLLESGAAYNC). Residues 358 to 413 (ALHASLRQLESYPPPLKHLCRVSIRLCLRPWPVDTKVKALPLPDRLKWYLLSAHSD) form the SOCS box domain.

This sequence belongs to the ankyrin SOCS box (ASB) family. As to quaternary structure, binds APS. Identified in a complex with ELOB and ELOC. Interacts with CUL5 and RNF7. Interacts with SQSTM1. Detected in adipocytes.

Its subcellular location is the cytoplasm. The protein operates within protein modification; protein ubiquitination. Functionally, probable substrate-recognition component of a SCF-like ECS (Elongin-Cullin-SOCS-box protein) E3 ubiquitin-protein ligase complex which mediates the ubiquitination and subsequent proteasomal degradation of target proteins. May play a role in the regulation of cell proliferation and autophagy by promoting the ubiquitination and degradation of SQSTM1. This is Ankyrin repeat and SOCS box protein 6 (Asb6) from Mus musculus (Mouse).